The primary structure comprises 205 residues: MAASTASHRPIKGILKNKTSTTSSMVASAEQPRGNVDEELSKKSQKWDEMNILATYHPADKDYGLMKIDEPSTPYHSMMGDDEDACSDTEATEAMAPDILARKLAAAEGLEPKYRIQEQESSGEEDSDLSPEEREKKRQFEMKRKLHYNEGLNIKLARQLISKDLHDDDEDEEMLETADGESMNTEESNQGSTPSDQQQNKLRSS.

The tract at residues 1 to 44 (MAASTASHRPIKGILKNKTSTTSSMVASAEQPRGNVDEELSKKS) is disordered. At alanine 2 the chain carries N-acetylalanine. Required for binding PPP1CC regions lie at residues 12-17 (KGILKN) and 43-55 (KSQK…ILAT). The segment covering 17–26 (NKTSTTSSMV) has biased composition (polar residues). The span at 35–44 (NVDEELSKKS) shows a compositional bias: basic and acidic residues. The residue at position 44 (serine 44) is a Phosphoserine; by ATM. Position 73 is a phosphothreonine; by GSK3 (threonine 73). Serine 87 is modified (phosphoserine). 2 positions are modified to phosphothreonine: threonine 89 and threonine 92. Residues 111-142 (EPKYRIQEQESSGEEDSDLSPEEREKKRQFEM) form a disordered region. 4 positions are modified to phosphoserine: serine 121, serine 122, serine 127, and serine 130. The span at 121 to 130 (SSGEEDSDLS) shows a compositional bias: acidic residues. A compositionally biased stretch (basic and acidic residues) spans 131–142 (PEEREKKRQFEM). Residues 147–150 (HYNE) are required for binding PPP1CC catalytic center, displacing metal ions and inhibition of PPP1CC catalytic activity. A disordered region spans residues 163–205 (KDLHDDDEDEEMLETADGESMNTEESNQGSTPSDQQQNKLRSS). A compositionally biased stretch (acidic residues) spans 167 to 179 (DDDEDEEMLETAD). Positions 182 to 205 (SMNTEESNQGSTPSDQQQNKLRSS) are enriched in polar residues.

Belongs to the protein phosphatase inhibitor 2 family. Heterodimer with PP1. In terms of processing, phosphorylation on Thr-73 by GSK3 activates PP1 by dissociating the PP1-PPP1R2 complex. Phosphorylation on Ser-44 by ATM activates PP1 by dissociating the PP1-PPP1R2 complex.

In terms of biological role, inhibitor of protein-phosphatase 1. The protein is Protein phosphatase inhibitor 2 (PPP1R2) of Homo sapiens (Human).